The chain runs to 90 residues: QKACTMDYFPVCCQIVLGGGAYTAGNPCSCQGFVASKGTCDNPYPCPCTTEAQFPVCCTTQWGLVSATGNCACGCMGGVPVSDGPCPEVY.

Q1 carries the pyrrolidone carboxylic acid modification. Residues C46 and C71 are joined by a disulfide bond.

Post-translationally, the N-terminus is blocked. Contains seven disulfide bonds. In terms of processing, proteolytically cleaved. Major form may consist of cleaved, disulfide-bonded subunits.

Functionally, lectin with specificity for complex N-linked glycans and O-linked glycans. Has hemagglutinating activity towards rabbit erythrocytes that is inhibited by N-acetyl-D-galactosamine. This Hypnea cervicornis (Brazilian red alga) protein is Lectin-1.